Consider the following 430-residue polypeptide: Gamma-glutamyl phosphate reductase (430 aa).

It belongs to the gamma-glutamyl phosphate reductase family.

It localises to the cytoplasm. The enzyme catalyses L-glutamate 5-semialdehyde + phosphate + NADP(+) = L-glutamyl 5-phosphate + NADPH + H(+). It functions in the pathway amino-acid biosynthesis; L-proline biosynthesis; L-glutamate 5-semialdehyde from L-glutamate: step 2/2. In terms of biological role, catalyzes the NADPH-dependent reduction of L-glutamate 5-phosphate into L-glutamate 5-semialdehyde and phosphate. The product spontaneously undergoes cyclization to form 1-pyrroline-5-carboxylate. This is Gamma-glutamyl phosphate reductase from Methylococcus capsulatus (strain ATCC 33009 / NCIMB 11132 / Bath).